The following is a 701-amino-acid chain: Glycine--tRNA ligase beta subunit (701 aa).

It belongs to the class-II aminoacyl-tRNA synthetase family. In terms of assembly, tetramer of two alpha and two beta subunits.

Its subcellular location is the cytoplasm. It catalyses the reaction tRNA(Gly) + glycine + ATP = glycyl-tRNA(Gly) + AMP + diphosphate. The sequence is that of Glycine--tRNA ligase beta subunit from Helicobacter pylori (strain HPAG1).